We begin with the raw amino-acid sequence, 404 residues long: Probable tRNA sulfurtransferase (404 aa).

The THUMP domain maps to 61-166 (EAVSERLKDV…SGYSYIMCDE (106 aa)). Residues 184–185 (LL), 209–210 (HF), Arg266, Gly288, and Gln297 each bind ATP.

This sequence belongs to the ThiI family.

It is found in the cytoplasm. The catalysed reaction is [ThiI sulfur-carrier protein]-S-sulfanyl-L-cysteine + a uridine in tRNA + 2 reduced [2Fe-2S]-[ferredoxin] + ATP + H(+) = [ThiI sulfur-carrier protein]-L-cysteine + a 4-thiouridine in tRNA + 2 oxidized [2Fe-2S]-[ferredoxin] + AMP + diphosphate. It catalyses the reaction [ThiS sulfur-carrier protein]-C-terminal Gly-Gly-AMP + S-sulfanyl-L-cysteinyl-[cysteine desulfurase] + AH2 = [ThiS sulfur-carrier protein]-C-terminal-Gly-aminoethanethioate + L-cysteinyl-[cysteine desulfurase] + A + AMP + 2 H(+). It functions in the pathway cofactor biosynthesis; thiamine diphosphate biosynthesis. Functionally, catalyzes the ATP-dependent transfer of a sulfur to tRNA to produce 4-thiouridine in position 8 of tRNAs, which functions as a near-UV photosensor. Also catalyzes the transfer of sulfur to the sulfur carrier protein ThiS, forming ThiS-thiocarboxylate. This is a step in the synthesis of thiazole, in the thiamine biosynthesis pathway. The sulfur is donated as persulfide by IscS. In Bacillus cereus (strain AH820), this protein is Probable tRNA sulfurtransferase.